The sequence spans 257 residues: Isoprenyl transferase 1 (257 aa).

Residue D37 is part of the active site. D37 contacts Mg(2+). Substrate is bound by residues 38–41 (GNRR), W42, H54, and 82–84 (STD). N85 (proton acceptor) is an active-site residue. Substrate is bound by residues F86, R88, R206, and 212–214 (RLS). E225 contributes to the Mg(2+) binding site.

It belongs to the UPP synthase family. Homodimer. The cofactor is Mg(2+).

In terms of biological role, catalyzes the condensation of isopentenyl diphosphate (IPP) with allylic pyrophosphates generating different type of terpenoids. This is Isoprenyl transferase 1 from Streptomyces avermitilis (strain ATCC 31267 / DSM 46492 / JCM 5070 / NBRC 14893 / NCIMB 12804 / NRRL 8165 / MA-4680).